The chain runs to 430 residues: Vitamin B6 salvage pathway transcriptional repressor PtsJ (430 aa).

An HTH gntR-type domain is found at 4–72 (GKTANEIFDS…GRNGTVIKGS (69 aa)). The segment at residues 32–51 (VRELASELKVNRNTVAAAYK) is a DNA-binding region (H-T-H motif). Positions 70–95 (KGSPSPVALEGGDPHTPLHDLSGGNP) are disordered. An N6-(pyridoxal phosphate)lysine modification is found at Lys282.

This sequence in the C-terminal section; belongs to the class-I pyridoxal-phosphate-dependent aminotransferase family. As to quaternary structure, homodimer in both apo- and holo-forms.

Acts as a transcriptional repressor of the pdxK gene, encoding a pyridoxal kinase involved in the vitamin B6 salvage pathway. Also represses transcription of its own gene. Binds to the ptsJ-pdxK intergenic region, but does not bind pdxY and pdxH promoters. Among all six B6 vitamers, only pyridoxal 5'-phosphate (PLP) clearly binds to the protein and acts as an effector molecule for PtsJ, inducing a protein conformational change that increases affinity for DNA. Thus, PLP stabilizes protein-DNA interactions, reinforcing repression. This is Vitamin B6 salvage pathway transcriptional repressor PtsJ from Salmonella typhimurium (strain LT2 / SGSC1412 / ATCC 700720).